The sequence spans 417 residues: D-amino acid dehydrogenase (417 aa).

3–17 (IIVLGAGVIGVTSAY) lines the FAD pocket.

The protein belongs to the DadA oxidoreductase family. FAD serves as cofactor.

The enzyme catalyses a D-alpha-amino acid + A + H2O = a 2-oxocarboxylate + AH2 + NH4(+). It functions in the pathway amino-acid degradation; D-alanine degradation; NH(3) and pyruvate from D-alanine: step 1/1. Oxidative deamination of D-amino acids. The protein is D-amino acid dehydrogenase of Azorhizobium caulinodans (strain ATCC 43989 / DSM 5975 / JCM 20966 / LMG 6465 / NBRC 14845 / NCIMB 13405 / ORS 571).